Here is a 785-residue protein sequence, read N- to C-terminus: Endonuclease MutS2 (785 aa).

335 to 342 (GPNTGGKT) contacts ATP. The region spanning 710-785 (LDLRGERYED…GNGVTIVEFK (76 aa)) is the Smr domain.

It belongs to the DNA mismatch repair MutS family. MutS2 subfamily. Homodimer. Binds to stalled ribosomes, contacting rRNA.

Endonuclease that is involved in the suppression of homologous recombination and thus may have a key role in the control of bacterial genetic diversity. Functionally, acts as a ribosome collision sensor, splitting the ribosome into its 2 subunits. Detects stalled/collided 70S ribosomes which it binds and splits by an ATP-hydrolysis driven conformational change. Acts upstream of the ribosome quality control system (RQC), a ribosome-associated complex that mediates the extraction of incompletely synthesized nascent chains from stalled ribosomes and their subsequent degradation. Probably generates substrates for RQC. This Listeria monocytogenes serovar 1/2a (strain ATCC BAA-679 / EGD-e) protein is Endonuclease MutS2.